A 244-amino-acid chain; its full sequence is Protein pendolino (244 aa).

One can recognise a UBC core domain in the interval 20–176 (QQEYKILAEY…VQENIKESKE (157 aa)).

Belongs to the ubiquitin-conjugating enzyme family. FTS subfamily. In terms of assembly, interacts (via N-terminus) with cav/HOAP (via N-terminus); the interaction is direct. Probably interacts (via N-terminus and UBC domain) with ver and moi.

Its subcellular location is the nucleus. It localises to the nucleolus. The protein resides in the chromosome. Its function is as follows. Required for efficient DNA replication, probably through involvement in telomere replication. May have a role in telomere capping of heterochromatic chromosome ends. This chain is Protein pendolino, found in Drosophila melanogaster (Fruit fly).